A 668-amino-acid chain; its full sequence is UvrABC system protein C (668 aa).

A GIY-YIG domain is found at aspartate 14–isoleucine 91. The UVR domain maps to lysine 196 to leucine 231.

It belongs to the UvrC family. Interacts with UvrB in an incision complex.

It is found in the cytoplasm. The UvrABC repair system catalyzes the recognition and processing of DNA lesions. UvrC both incises the 5' and 3' sides of the lesion. The N-terminal half is responsible for the 3' incision and the C-terminal half is responsible for the 5' incision. The polypeptide is UvrABC system protein C (Lactococcus lactis subsp. lactis (strain IL1403) (Streptococcus lactis)).